The sequence spans 57 residues: UPF0391 membrane protein azo1765 (57 aa).

A run of 2 helical transmembrane segments spans residues 1 to 21 (MIKWAIIFFIISLVAGLFGFT) and 33 to 53 (VLFFIALAIFLIVLIFGVGLG).

It belongs to the UPF0391 family.

The protein localises to the cell membrane. The protein is UPF0391 membrane protein azo1765 of Azoarcus sp. (strain BH72).